Reading from the N-terminus, the 189-residue chain is Xanthine phosphoribosyltransferase (189 aa).

Xanthine is bound by residues L20 and N27. 128 to 132 contributes to the 5-phospho-alpha-D-ribose 1-diphosphate binding site; it reads ANGEA. K156 provides a ligand contact to xanthine.

This sequence belongs to the purine/pyrimidine phosphoribosyltransferase family. Xpt subfamily. In terms of assembly, homodimer.

The protein localises to the cytoplasm. It carries out the reaction XMP + diphosphate = xanthine + 5-phospho-alpha-D-ribose 1-diphosphate. The protein operates within purine metabolism; XMP biosynthesis via salvage pathway; XMP from xanthine: step 1/1. In terms of biological role, converts the preformed base xanthine, a product of nucleic acid breakdown, to xanthosine 5'-monophosphate (XMP), so it can be reused for RNA or DNA synthesis. The sequence is that of Xanthine phosphoribosyltransferase from Lactobacillus delbrueckii subsp. bulgaricus (strain ATCC 11842 / DSM 20081 / BCRC 10696 / JCM 1002 / NBRC 13953 / NCIMB 11778 / NCTC 12712 / WDCM 00102 / Lb 14).